The sequence spans 257 residues: MGRAPCCEKMGLKKGPWTPEEDKVLVAHIQRHGHGNWRALPKQAGLLRCGKSCRLRWINYLRPDIKRGNFSKEEEDTIIHLHELLGNRWSAIAARLPGRTDNEIKNVWHTHLKKRLDAPAQGGHVAASGGKKHKKPKSAKKPAAAAAAPPASPERSASSSVTESSMASSVAEEHGNAGISSASASVCAKEESSFTSASEEFQIDDSFWSETLSMPLDGYDVSMEPGDAFVAPPSADDMDYWLGVFMESGEAQDLPQI.

2 HTH myb-type domains span residues 9 to 61 and 62 to 116; these read KMGL…INYL and RPDI…KKRL. 2 consecutive DNA-binding regions (H-T-H motif) follow at residues 37–61 and 89–112; these read WRAL…INYL and WSAI…HTHL. The interval 115 to 179 is disordered; it reads RLDAPAQGGH…VAEEHGNAGI (65 aa). Positions 130–140 are enriched in basic residues; sequence GKKHKKPKSAK. The segment covering 141–170 has biased composition (low complexity); that stretch reads KPAAAAAAPPASPERSASSSVTESSMASSV.

The protein localises to the nucleus. Functionally, transcriptional activator involved in cold stress response. Regulates positively the expression of genes involved in reactive oxygen species (ROS) scavenging such as peroxidase and superoxide dismutase during cold stress. Transactivates a complex gene network that have major effects on stress tolerance and panicle development. This Oryza sativa subsp. japonica (Rice) protein is Transcription factor MYB4.